The sequence spans 308 residues: Eukaryotic translation initiation factor 3 subunit G-B (308 aa).

2 disordered regions span residues 1-35 (MPTGDYDSKPSWADQVEEEGIDVEPLSPQIKKQDP) and 176-227 (STAD…DDNA). The segment covering 185-194 (GAEPEPAQAP) has biased composition (low complexity). The span at 209-227 (GGSRRGESMQPNRRADDNA) shows a compositional bias: basic and acidic residues. The RRM domain maps to 227–305 (ATIRVTNLSE…LILNVEWAKP (79 aa)).

The protein belongs to the eIF-3 subunit G family. In terms of assembly, component of the eukaryotic translation initiation factor 3 (eIF-3) complex, which is composed of 13 subunits: eif3a, eif3b, eif3c, eif3d, eif3e, eif3f, eif3g, eif3h, eif3i, eif3j, eif3k, eif3l and eif3m.

Its subcellular location is the cytoplasm. Its function is as follows. RNA-binding component of the eukaryotic translation initiation factor 3 (eIF-3) complex, which is involved in protein synthesis of a specialized repertoire of mRNAs and, together with other initiation factors, stimulates binding of mRNA and methionyl-tRNAi to the 40S ribosome. The eIF-3 complex specifically targets and initiates translation of a subset of mRNAs involved in cell proliferation. This subunit can bind 18S rRNA. The polypeptide is Eukaryotic translation initiation factor 3 subunit G-B (eif3g-b) (Xenopus laevis (African clawed frog)).